We begin with the raw amino-acid sequence, 525 residues long: CBL-interacting protein kinase 21 (525 aa).

One can recognise a Protein kinase domain in the interval 87-342 (YEMGRALGEG…ITGIRAHEWF (256 aa)). ATP is bound by residues 93–101 (LGEGHFGKV) and Lys116. Asp210 (proton acceptor) is an active-site residue. The interval 228-257 (DFGLSALPQNQRKDGLLHTTCGSPNYIAPE) is activation loop. Residues 372–401 (DIETSPAISQINAFQLIGMSSCLDLSGFFE) enclose the NAF domain. The segment at 407 to 436 (ERKIRFVSNYSPTSLFEKIESTVTEKGFQV) is PPI.

It belongs to the protein kinase superfamily. CAMK Ser/Thr protein kinase family. SNF1 subfamily. Mn(2+) serves as cofactor.

It catalyses the reaction L-seryl-[protein] + ATP = O-phospho-L-seryl-[protein] + ADP + H(+). It carries out the reaction L-threonyl-[protein] + ATP = O-phospho-L-threonyl-[protein] + ADP + H(+). Its function is as follows. CIPK serine-threonine protein kinases interact with CBL proteins. Binding of a CBL protein to the regulatory NAF domain of CIPK protein lead to the activation of the kinase in a calcium-dependent manner. The protein is CBL-interacting protein kinase 21 (CIPK21) of Oryza sativa subsp. japonica (Rice).